Consider the following 564-residue polypeptide: MRLSQFHLHTTKETPADAELVSHRLMLRAGMIRKLASGLYTWSPLGLRVLRKVEAIVREEMDRAGAVEVLFPTIQPRELWDATGRWEKFGGQLLKIKDRKEQEFCYSPTAEEAAAEFARQEINSYKQLPLNFYQIQTKFRDEIRPRFGVMRAREFLMKDAYSFHLTDADMAREYDNMRAAYTRIFTRLGLDFRAVQADSGAIGGDASQEFHVIADSGEDSLAFSTGSDYAANVETASAALPAPRAAASEAMQQVATPTQKTCEDVAQLLGIALQRTVKSVAVMTEAGFVLALVRGDHAVNEIKLAKVPGLAGYRLANETEIRAHLGCEPGFLGPVNTARPVRVVADRDVAALADFVVGANVSGAHLVGVNWGRDLPEPETVADVRNVVEGERAADGGELRLARGIEVGHVFQLGSQYAQALQATVIDEGGKVAVMKMGCYGIGISRIVAAAIEQNHDDAGIIWPAPMAPWQVVVCVINPKQDAQVVSAAQALLDELIAAGLDAALDDRGLRPGAMFADMELLGIPHRVVVSERGLAAGTFEYRARTAAAAENLDKAGLFSRLGR.

It belongs to the class-II aminoacyl-tRNA synthetase family. ProS type 1 subfamily. In terms of assembly, homodimer.

It localises to the cytoplasm. The enzyme catalyses tRNA(Pro) + L-proline + ATP = L-prolyl-tRNA(Pro) + AMP + diphosphate. Functionally, catalyzes the attachment of proline to tRNA(Pro) in a two-step reaction: proline is first activated by ATP to form Pro-AMP and then transferred to the acceptor end of tRNA(Pro). As ProRS can inadvertently accommodate and process non-cognate amino acids such as alanine and cysteine, to avoid such errors it has two additional distinct editing activities against alanine. One activity is designated as 'pretransfer' editing and involves the tRNA(Pro)-independent hydrolysis of activated Ala-AMP. The other activity is designated 'posttransfer' editing and involves deacylation of mischarged Ala-tRNA(Pro). The misacylated Cys-tRNA(Pro) is not edited by ProRS. The sequence is that of Proline--tRNA ligase from Xanthomonas oryzae pv. oryzae (strain KACC10331 / KXO85).